Consider the following 587-residue polypeptide: ASI1-immunoprecipitated protein 3 (587 aa).

The tract at residues 1 to 118 (MVLSRRFAQV…NVTGKGKGKR (118 aa)) is disordered. Acidic residues predominate over residues 66–98 (EDEDMAEGDDDQAEEETNPEAEEEEDEEEEEKP). The BAH domain occupies 129 to 248 (NTYDLEVPVL…TVEKKLWKLT (120 aa)). Residues 344–493 (HRDKCLGKLL…RMQMTSVRCS (150 aa)) enclose the TFIIS central domain. Disordered stretches follow at residues 371-396 (EAKVGSDASHLEQDEKDTKPENGKDE) and 539-587 (TDKP…KKPE). Positions 560-570 (ETNKPKDEALK) are enriched in basic and acidic residues. Positions 571–581 (TNDSNADNNPE) are enriched in polar residues.

Interacts with MOM1. Component of the ASI1-AIPP1-EDM2 (AAE) RNA regulatory complex composed of at least AIPP1/EDM3, ASI1 and EDM2 and may contain CPL2, AIPP2 and AIPP3/BDT1. Part of the BAH-PHD bivalent histone reader complex that contains AIPP2, PAIPP2 and AIPP3/BDT1; the BAH-PHD module associates with CPL2 to form the BAH-PHD-CPL2 complex (BPC) for transcriptional repression. Binds directly to CPL2, PHD1, PAIPP2/PHD2, AIPP2/PHD3, PHD4, PHD5 and PHD6. In terms of tissue distribution, expressed ubiquitously.

It localises to the nucleus. Transcriptional repressor. Together with PHD finger-containing proteins (e.g. PHD1, PAIPP2/PHD2, AIPP2/PHD3, PHD4, PHD5 and PHD6), cooperates to form a BAH-PHD bivalent histone reader complex able to read histone H3 lysine 27 trimethylation (H3K27me3) and low-methylated H3K4 histone marks in order to regulate transcription, especially to prevent early flowering; H3K27me3 reader of this complex. CPL2 is subsequently recruited to form a BAH-PHD-CPL2 complex (BPC) in order to silence several H3K27me3 and low-methylated H3K4 enriched loci, including AGO5, via the phosphorylation state-dependent inhibition of Pol II release from the transcriptional start site (e.g. Ser5P-Pol II dephosphorylation). The BPC complex represses flowering by inhibiting the expression of several genes, including AGL6, FT, FUL and SOC1. Prevents the accumulation of intronic heterochromatin-containing genes (e.g. IBM1, At3g05410 and RPP7). Seems to not be involved in vernalization establishment, by contrast to orthologs in grass plants. This is ASI1-immunoprecipitated protein 3 from Arabidopsis thaliana (Mouse-ear cress).